Here is a 372-residue protein sequence, read N- to C-terminus: Queuine tRNA-ribosyltransferase (372 aa).

The Proton acceptor role is filled by D92. Substrate contacts are provided by residues 92 to 96 (DSGGY), D146, Q188, and G215. The RNA binding stretch occupies residues 246–252 (GIGSLRE). D265 serves as the catalytic Nucleophile. The segment at 270-274 (TRLGR) is RNA binding; important for wobble base 34 recognition. Zn(2+) contacts are provided by C303, C305, C308, and H334.

The protein belongs to the queuine tRNA-ribosyltransferase family. Homodimer. Within each dimer, one monomer is responsible for RNA recognition and catalysis, while the other monomer binds to the replacement base PreQ1. Requires Zn(2+) as cofactor.

It carries out the reaction 7-aminomethyl-7-carbaguanine + guanosine(34) in tRNA = 7-aminomethyl-7-carbaguanosine(34) in tRNA + guanine. It participates in tRNA modification; tRNA-queuosine biosynthesis. Catalyzes the base-exchange of a guanine (G) residue with the queuine precursor 7-aminomethyl-7-deazaguanine (PreQ1) at position 34 (anticodon wobble position) in tRNAs with GU(N) anticodons (tRNA-Asp, -Asn, -His and -Tyr). Catalysis occurs through a double-displacement mechanism. The nucleophile active site attacks the C1' of nucleotide 34 to detach the guanine base from the RNA, forming a covalent enzyme-RNA intermediate. The proton acceptor active site deprotonates the incoming PreQ1, allowing a nucleophilic attack on the C1' of the ribose to form the product. After dissociation, two additional enzymatic reactions on the tRNA convert PreQ1 to queuine (Q), resulting in the hypermodified nucleoside queuosine (7-(((4,5-cis-dihydroxy-2-cyclopenten-1-yl)amino)methyl)-7-deazaguanosine). This is Queuine tRNA-ribosyltransferase from Prochlorococcus marinus (strain MIT 9312).